The following is a 185-amino-acid chain: Peptidyl-tRNA hydrolase (185 aa).

Tyr-14 provides a ligand contact to tRNA. His-19 serves as the catalytic Proton acceptor. The tRNA site is built by Tyr-64, Asn-66, and Asn-112.

The protein belongs to the PTH family. Monomer.

The protein resides in the cytoplasm. The enzyme catalyses an N-acyl-L-alpha-aminoacyl-tRNA + H2O = an N-acyl-L-amino acid + a tRNA + H(+). Functionally, hydrolyzes ribosome-free peptidyl-tRNAs (with 1 or more amino acids incorporated), which drop off the ribosome during protein synthesis, or as a result of ribosome stalling. Its function is as follows. Catalyzes the release of premature peptidyl moieties from peptidyl-tRNA molecules trapped in stalled 50S ribosomal subunits, and thus maintains levels of free tRNAs and 50S ribosomes. In Shouchella clausii (strain KSM-K16) (Alkalihalobacillus clausii), this protein is Peptidyl-tRNA hydrolase.